Reading from the N-terminus, the 121-residue chain is Large ribosomal subunit protein uL18 (121 aa).

Belongs to the universal ribosomal protein uL18 family. Part of the 50S ribosomal subunit; part of the 5S rRNA/L5/L18/L25 subcomplex. Contacts the 5S and 23S rRNAs.

This is one of the proteins that bind and probably mediate the attachment of the 5S RNA into the large ribosomal subunit, where it forms part of the central protuberance. The protein is Large ribosomal subunit protein uL18 of Roseiflexus castenholzii (strain DSM 13941 / HLO8).